Consider the following 506-residue polypeptide: RNA-splicing ligase RtcB homolog (506 aa).

Mn(2+)-binding residues include Asp120, Cys123, His228, His260, and His354. 227–231 (NHYAE) provides a ligand contact to GMP. GMP is bound by residues 354-355 (HN), 403-406 (GGTM), Ser410, 429-432 (HGAG), and Lys505. Residue His429 is the GMP-histidine intermediate of the active site.

The protein belongs to the RtcB family. Catalytic component of the tRNA-splicing ligase complex. Mn(2+) serves as cofactor.

The catalysed reaction is a 3'-end 3'-phospho-ribonucleotide-RNA + a 5'-end dephospho-ribonucleoside-RNA + GTP = a ribonucleotidyl-ribonucleotide-RNA + GMP + diphosphate. It catalyses the reaction a 3'-end 2',3'-cyclophospho-ribonucleotide-RNA + a 5'-end dephospho-ribonucleoside-RNA + GTP + H2O = a ribonucleotidyl-ribonucleotide-RNA + GMP + diphosphate + H(+). Its function is as follows. Catalytic subunit of the tRNA-splicing ligase complex that acts by directly joining spliced tRNA halves to mature-sized tRNAs by incorporating the precursor-derived splice junction phosphate into the mature tRNA as a canonical 3',5'-phosphodiester. May act as an RNA ligase with broad substrate specificity, and may function toward other RNAs. This is RNA-splicing ligase RtcB homolog from Drosophila melanogaster (Fruit fly).